Here is a 391-residue protein sequence, read N- to C-terminus: Polysialic acid biosynthesis protein P7 (391 aa).

Its function is as follows. May be involved in the synthesis of polysialic acid (PSA). This Escherichia coli protein is Polysialic acid biosynthesis protein P7 (neuC).